Here is a 382-residue protein sequence, read N- to C-terminus: D-galactonate dehydratase (382 aa).

A Mg(2+)-binding site is contributed by aspartate 183. The active-site Proton donor is histidine 185. Positions 209 and 235 each coordinate Mg(2+). Histidine 285 serves as the catalytic Proton acceptor.

Belongs to the mandelate racemase/muconate lactonizing enzyme family. GalD subfamily. Mg(2+) is required as a cofactor.

It catalyses the reaction D-galactonate = 2-dehydro-3-deoxy-D-galactonate + H2O. Its pathway is carbohydrate acid metabolism; D-galactonate degradation; D-glyceraldehyde 3-phosphate and pyruvate from D-galactonate: step 1/3. Functionally, catalyzes the dehydration of D-galactonate to 2-keto-3-deoxy-D-galactonate. The polypeptide is D-galactonate dehydratase (Escherichia coli (strain 55989 / EAEC)).